The primary structure comprises 161 residues: RNA pyrophosphohydrolase (161 aa).

In terms of domain architecture, Nudix hydrolase spans 12–154 (PYRPGVGMMI…KRKLYQAVVK (143 aa)). Positions 46–67 (GGIVPGETPSIAAMREMLEEIG) match the Nudix box motif.

It belongs to the Nudix hydrolase family. RppH subfamily. A divalent metal cation serves as cofactor.

Accelerates the degradation of transcripts by removing pyrophosphate from the 5'-end of triphosphorylated RNA, leading to a more labile monophosphorylated state that can stimulate subsequent ribonuclease cleavage. In Rickettsia africae (strain ESF-5), this protein is RNA pyrophosphohydrolase.